A 391-amino-acid polypeptide reads, in one-letter code: DNA-directed RNA polymerase subunit Rpo1C (391 aa).

Belongs to the RNA polymerase beta' chain family. In terms of assembly, part of the RNA polymerase complex.

Its subcellular location is the cytoplasm. It carries out the reaction RNA(n) + a ribonucleoside 5'-triphosphate = RNA(n+1) + diphosphate. Functionally, DNA-dependent RNA polymerase (RNAP) catalyzes the transcription of DNA into RNA using the four ribonucleoside triphosphates as substrates. Forms part of the jaw domain. In Thermococcus onnurineus (strain NA1), this protein is DNA-directed RNA polymerase subunit Rpo1C.